We begin with the raw amino-acid sequence, 318 residues long: Protoheme IX farnesyltransferase (318 aa).

A run of 9 helical transmembrane segments spans residues 37–57 (LVIF…HPVI), 58–78 (AFTA…LNMW), 100–120 (VTAR…VMTM), 122–142 (VLVN…YLVV), 155–175 (IVIG…AVTG), 182–202 (FVLF…LALY), 228–248 (IMLY…LGFA), 251–271 (LYMG…FGIW), and 291–311 (ILYL…GLGG).

It belongs to the UbiA prenyltransferase family. Protoheme IX farnesyltransferase subfamily.

Its subcellular location is the cell inner membrane. The enzyme catalyses heme b + (2E,6E)-farnesyl diphosphate + H2O = Fe(II)-heme o + diphosphate. Its pathway is porphyrin-containing compound metabolism; heme O biosynthesis; heme O from protoheme: step 1/1. Functionally, converts heme B (protoheme IX) to heme O by substitution of the vinyl group on carbon 2 of heme B porphyrin ring with a hydroxyethyl farnesyl side group. The chain is Protoheme IX farnesyltransferase from Parvibaculum lavamentivorans (strain DS-1 / DSM 13023 / NCIMB 13966).